A 78-amino-acid polypeptide reads, in one-letter code: Beta-defensin 105 (78 aa).

Residues 1 to 27 form the signal peptide; sequence MALIRKTFYFLFAMFFILVQLPSGCQA. Disulfide bonds link Cys43/Cys74, Cys53/Cys67, and Cys57/Cys73.

It belongs to the beta-defensin family. As to expression, specifically expressed in testis.

It is found in the secreted. Has antibacterial activity. This Homo sapiens (Human) protein is Beta-defensin 105 (DEFB105A).